A 215-amino-acid polypeptide reads, in one-letter code: Adenylate kinase (215 aa).

Residue 10-15 (GAGKGT) participates in ATP binding. The interval 30–59 (STGDMLRAAVKAGSPLGQQVKGVMDSGGLV) is NMP. AMP is bound by residues Thr31, Arg36, 57 to 59 (GLV), 85 to 88 (GFPR), and Gln92. Residues 122–159 (GRRVHPASGRVYHTEHNPPKVAGKDDVTGEELIQREDD) are LID. ATP contacts are provided by residues Arg123 and 132–133 (VY). 2 residues coordinate AMP: Arg156 and Arg167. Gly201 lines the ATP pocket.

Belongs to the adenylate kinase family. As to quaternary structure, monomer.

Its subcellular location is the cytoplasm. It carries out the reaction AMP + ATP = 2 ADP. It functions in the pathway purine metabolism; AMP biosynthesis via salvage pathway; AMP from ADP: step 1/1. Its function is as follows. Catalyzes the reversible transfer of the terminal phosphate group between ATP and AMP. Plays an important role in cellular energy homeostasis and in adenine nucleotide metabolism. The polypeptide is Adenylate kinase (Pseudomonas aeruginosa (strain LESB58)).